Here is a 675-residue protein sequence, read N- to C-terminus: Vitamin K-dependent protein S (675 aa).

The signal sequence occupies residues M1 to T24. Positions N25–R41 are excised as a propeptide. One can recognise a Gla domain in the interval A42–G87. A 4-carboxyglutamate mark is found at E47, E48, E55, E57, E60, E61, E66, E67, E70, E73, and E77. Cysteines 58 and 63 form a disulfide. The segment at C88–A116 is thrombin-sensitive. Residues I117 to Q155 form the EGF-like 1 domain. Cystine bridges form between C121–C134, C126–C143, C145–C154, C161–C175, C171–C184, C186–C199, C205–C217, C212–C226, C228–C241, C247–C256, C252–C265, C267–C282, and C449–C475. D136 is modified ((3R)-3-hydroxyaspartate). The EGF-like 2; calcium-binding domain occupies D157 to K200. In terms of domain architecture, EGF-like 3; calcium-binding spans D201 to K242. The EGF-like 4; calcium-binding domain maps to D243 to E283. Laminin G-like domains follow at residues L299 to C475 and Y484 to C665. 2 N-linked (GlcNAc...) asparagine glycosylation sites follow: N499 and N509.

The iron and 2-oxoglutarate dependent 3-hydroxylation of aspartate and asparagine is (R) stereospecific within EGF domains. Plasma.

The protein resides in the secreted. In terms of biological role, anticoagulant plasma protein; it is a cofactor to activated protein C in the degradation of coagulation factors Va and VIIIa. It helps to prevent coagulation and stimulating fibrinolysis. The protein is Vitamin K-dependent protein S (Pros1) of Rattus norvegicus (Rat).